A 180-amino-acid chain; its full sequence is Cancer/testis antigen 1 (180 aa).

Composition is skewed to gly residues over residues 1–47 and 55–66; these read MQAE…GPRG and GPGGGAPRGPHG. Positions 1–66 are disordered; the sequence is MQAEGRGTGG…GGGAPRGPHG (66 aa).

It belongs to the CTAG/PCC1 family. Expressed in testis and ovary and in a wide variety of cancers. Detected in uterine myometrium. Expressed from 18 weeks until birth in human fetal testis. In the adult testis, is strongly expressed in spermatogonia and in primary spermatocytes, but not in post-meiotic cells or in testicular somatic cells (at protein level).

The protein localises to the cytoplasm. This is Cancer/testis antigen 1 (CTAG1A) from Homo sapiens (Human).